The chain runs to 114 residues: uncharacterized protein (114 aa).

Residues 1–24 are disordered; that stretch reads MFGACYKQPLKPSGSEPPAEECRM.

Expressed in kidney and liver.

This is an uncharacterized protein from Homo sapiens (Human).